The primary structure comprises 106 residues: VYEQVSIEVPQSVEAPVVIITGASEIEASTIQALSFGPDVXKEADVEAMIKAVDAWGQVDVLINNAGITRAGVIGLQKNINVNAIAPGFIASDMTAKILETIPLGR.

It belongs to the short-chain dehydrogenases/reductases (SDR) family. As to quaternary structure, homotetramer. Mesocarp.

Its subcellular location is the plastid. It localises to the chloroplast. It catalyses the reaction a (3R)-hydroxyacyl-[ACP] + NADP(+) = a 3-oxoacyl-[ACP] + NADPH + H(+). It functions in the pathway lipid metabolism; fatty acid biosynthesis. The chain is 3-oxoacyl-[acyl-carrier-protein] reductase from Persea americana (Avocado).